Reading from the N-terminus, the 65-residue chain is Large ribosomal subunit protein bL33m (65 aa).

It belongs to the bacterial ribosomal protein bL33 family. In terms of assembly, component of the mitochondrial ribosome large subunit (39S) which comprises a 16S rRNA and about 50 distinct proteins.

The protein resides in the mitochondrion. The sequence is that of Large ribosomal subunit protein bL33m (mRpL33) from Anopheles gambiae (African malaria mosquito).